A 177-amino-acid polypeptide reads, in one-letter code: MSEFTTVARPYAKAAFDFAVEHQSVDRWQQMLAFAASVASNEQMTDLLSGALAPEALSETFIAICGDQLDEAGQNLIKVMAENGRLPTLTAVLEQFIQLRAAHDATAEVEVISSTTLSDEQLTKISAAMEKRLSRKVKLNCKIDKSVMAGVIIRAGDMVIDGSVRGRLERLADVLQS.

The protein belongs to the ATPase delta chain family. F-type ATPases have 2 components, F(1) - the catalytic core - and F(0) - the membrane proton channel. F(1) has five subunits: alpha(3), beta(3), gamma(1), delta(1), epsilon(1). F(0) has three main subunits: a(1), b(2) and c(10-14). The alpha and beta chains form an alternating ring which encloses part of the gamma chain. F(1) is attached to F(0) by a central stalk formed by the gamma and epsilon chains, while a peripheral stalk is formed by the delta and b chains.

It localises to the cell inner membrane. Functionally, f(1)F(0) ATP synthase produces ATP from ADP in the presence of a proton or sodium gradient. F-type ATPases consist of two structural domains, F(1) containing the extramembraneous catalytic core and F(0) containing the membrane proton channel, linked together by a central stalk and a peripheral stalk. During catalysis, ATP synthesis in the catalytic domain of F(1) is coupled via a rotary mechanism of the central stalk subunits to proton translocation. This protein is part of the stalk that links CF(0) to CF(1). It either transmits conformational changes from CF(0) to CF(1) or is implicated in proton conduction. This is ATP synthase subunit delta from Erwinia tasmaniensis (strain DSM 17950 / CFBP 7177 / CIP 109463 / NCPPB 4357 / Et1/99).